An 89-amino-acid chain; its full sequence is Small ribosomal subunit protein uS15 (89 aa).

This sequence belongs to the universal ribosomal protein uS15 family. In terms of assembly, part of the 30S ribosomal subunit. Forms a bridge to the 50S subunit in the 70S ribosome, contacting the 23S rRNA.

Functionally, one of the primary rRNA binding proteins, it binds directly to 16S rRNA where it helps nucleate assembly of the platform of the 30S subunit by binding and bridging several RNA helices of the 16S rRNA. In terms of biological role, forms an intersubunit bridge (bridge B4) with the 23S rRNA of the 50S subunit in the ribosome. The chain is Small ribosomal subunit protein uS15 from Corynebacterium diphtheriae (strain ATCC 700971 / NCTC 13129 / Biotype gravis).